We begin with the raw amino-acid sequence, 493 residues long: 1-aminocyclopropane-1-carboxylate synthase CMW33 (493 aa).

K279 carries the post-translational modification N6-(pyridoxal phosphate)lysine.

Belongs to the class-I pyridoxal-phosphate-dependent aminotransferase family. As to quaternary structure, homodimer. The cofactor is pyridoxal 5'-phosphate.

It catalyses the reaction S-adenosyl-L-methionine = 1-aminocyclopropane-1-carboxylate + S-methyl-5'-thioadenosine + H(+). Its pathway is alkene biosynthesis; ethylene biosynthesis via S-adenosyl-L-methionine; ethylene from S-adenosyl-L-methionine: step 1/2. Functionally, catalyzes the formation of 1-aminocyclopropane-1-carboxylate, a direct precursor of ethylene in higher plants. The chain is 1-aminocyclopropane-1-carboxylate synthase CMW33 (ACS1) from Cucurbita maxima (Pumpkin).